The primary structure comprises 96 residues: Putative pterin-4-alpha-carbinolamine dehydratase (96 aa).

The protein belongs to the pterin-4-alpha-carbinolamine dehydratase family.

The enzyme catalyses (4aS,6R)-4a-hydroxy-L-erythro-5,6,7,8-tetrahydrobiopterin = (6R)-L-erythro-6,7-dihydrobiopterin + H2O. The sequence is that of Putative pterin-4-alpha-carbinolamine dehydratase from Prochlorococcus marinus (strain MIT 9303).